A 351-amino-acid polypeptide reads, in one-letter code: Biotin synthase (351 aa).

Positions 48–265 constitute a Radical SAM core domain; sequence NKVRIHILDN…LCMFRLINPD (218 aa). [4Fe-4S] cluster contacts are provided by Cys63, Cys67, and Cys70. [2Fe-2S] cluster-binding residues include Cys107, Cys139, Cys199, and Arg269.

It belongs to the radical SAM superfamily. Biotin synthase family. Homodimer. The cofactor is [4Fe-4S] cluster. Requires [2Fe-2S] cluster as cofactor.

The catalysed reaction is (4R,5S)-dethiobiotin + (sulfur carrier)-SH + 2 reduced [2Fe-2S]-[ferredoxin] + 2 S-adenosyl-L-methionine = (sulfur carrier)-H + biotin + 2 5'-deoxyadenosine + 2 L-methionine + 2 oxidized [2Fe-2S]-[ferredoxin]. Its pathway is cofactor biosynthesis; biotin biosynthesis; biotin from 7,8-diaminononanoate: step 2/2. Its function is as follows. Catalyzes the conversion of dethiobiotin (DTB) to biotin by the insertion of a sulfur atom into dethiobiotin via a radical-based mechanism. The chain is Biotin synthase from Leptospira interrogans serogroup Icterohaemorrhagiae serovar copenhageni (strain Fiocruz L1-130).